A 664-amino-acid chain; its full sequence is Degenerin del-1 (664 aa).

Residues 1-67 (MARKYIDILK…IFTTSLYWVR (67 aa)) are Cytoplasmic-facing. The helical transmembrane segment at 68–88 (FLWVVVSLVCICLCMYSFSHV) threads the bilayer. The Extracellular portion of the chain corresponds to 89-607 (KDKYDRKEKI…WFNLMADMGG (519 aa)). N-linked (GlcNAc...) asparagine glycosylation is found at N241, N300, N394, N508, and N562. Residues 608 to 628 (QAGLFLGASIMSVIEFLFFAV) traverse the membrane as a helical segment. Residues 629 to 664 (RTLGIACKPRRWRQKTELLRAEELNDAEKGVSTNNN) are Cytoplasmic-facing.

Belongs to the amiloride-sensitive sodium channel (TC 1.A.6) family.

Its subcellular location is the membrane. In terms of biological role, probable sodium channel subunit. The chain is Degenerin del-1 (del-1) from Caenorhabditis elegans.